Here is a 151-residue protein sequence, read N- to C-terminus: Sec-independent protein translocase protein TatB (151 aa).

Residues 1 to 21 traverse the membrane as a helical segment; that stretch reads MFDVSFTELMVIGVIALVVIG. Positions 66 to 151 are disordered; it reads MDETARSMQT…DKTPPTGSAT (86 aa). The span at 93-103 shows a compositional bias: basic and acidic residues; that stretch reads AELDDTARDAS. 2 stretches are compositionally biased toward low complexity: residues 109–122 and 133–151; these read ADAP…VASD and APPA…GSAT.

Belongs to the TatB family. The Tat system comprises two distinct complexes: a TatABC complex, containing multiple copies of TatA, TatB and TatC subunits, and a separate TatA complex, containing only TatA subunits. Substrates initially bind to the TatABC complex, which probably triggers association of the separate TatA complex to form the active translocon.

The protein resides in the cell inner membrane. In terms of biological role, part of the twin-arginine translocation (Tat) system that transports large folded proteins containing a characteristic twin-arginine motif in their signal peptide across membranes. Together with TatC, TatB is part of a receptor directly interacting with Tat signal peptides. TatB may form an oligomeric binding site that transiently accommodates folded Tat precursor proteins before their translocation. This chain is Sec-independent protein translocase protein TatB, found in Bordetella parapertussis (strain 12822 / ATCC BAA-587 / NCTC 13253).